The following is a 233-amino-acid chain: Outer membrane protein MIP (233 aa).

The first 20 residues, 1–20, serve as a signal peptide directing secretion; the sequence is MKMKLVTAAVMGLAMSTAMA. The 90-residue stretch at 144–233 folds into the PPIase FKBP-type domain; the sequence is SDTVTVEYTG…IHLISVKKSS (90 aa).

This sequence belongs to the FKBP-type PPIase family.

The protein localises to the cell outer membrane. It catalyses the reaction [protein]-peptidylproline (omega=180) = [protein]-peptidylproline (omega=0). Strongly inhibited by FK506 but is completely resistant to cyclosporin A. Functionally, essential virulence factor associated with macrophage infectivity. Exhibits PPIase activity. The chain is Outer membrane protein MIP (mip) from Legionella pneumophila subsp. pneumophila (strain Philadelphia 1 / ATCC 33152 / DSM 7513).